The following is a 146-amino-acid chain: Inclusion membrane protein D (146 aa).

2 helical membrane-spanning segments follow: residues 38 to 58 and 68 to 88; these read AAVAVATILAIALLVVAGLLF and VVAASLFFGVGAFLLGGALVG.

The protein resides in the secreted. It is found in the host vacuole. Its subcellular location is the host pathogen-containing vacuole. It localises to the host pathogen-containing vacuole membrane. In terms of biological role, host inclusion membrane protein probably involved in early modification events of the chlamydial inclusion. The chain is Inclusion membrane protein D from Chlamydia trachomatis serovar L2 (strain ATCC VR-902B / DSM 19102 / 434/Bu).